A 202-amino-acid chain; its full sequence is Superoxide dismutase [Mn] (202 aa).

Mn(2+)-binding residues include His-27, His-82, Asp-164, and His-168.

The protein belongs to the iron/manganese superoxide dismutase family. In terms of assembly, homodimer. It depends on Mn(2+) as a cofactor.

The catalysed reaction is 2 superoxide + 2 H(+) = H2O2 + O2. In terms of biological role, destroys superoxide anion radicals which are normally produced within the cells and which are toxic to biological systems. The protein is Superoxide dismutase [Mn] (sodA) of Listeria monocytogenes serovar 1/2a (strain ATCC BAA-679 / EGD-e).